Consider the following 514-residue polypeptide: Nuclear hormone receptor family member nhr-85 (514 aa).

Positions 28–48 (TSFSSPPATSSSSLLSPSPSS) are disordered. Residues 110–186 (TILCQVCSDK…VGMSRDAVRF (77 aa)) constitute a DNA-binding region (nuclear receptor). 2 NR C4-type zinc fingers span residues 113–133 (CQVCSDKASGFHYGVFACEGC) and 150–174 (CTRAEDCLILRNNRNRCQCCRLKKC). The NR LBD domain maps to 216–514 (QYENLTEVMH…VSPVPTTLSE (299 aa)). A disordered region spans residues 465–514 (ERPRRISSSGAQEPLNLSLPHVRHQVKRDVDSDEQLEEMKVSPVPTTLSE).

It belongs to the nuclear hormone receptor family.

It is found in the nucleus. In terms of biological role, orphan nuclear receptor. The protein is Nuclear hormone receptor family member nhr-85 (nhr-85) of Caenorhabditis elegans.